The chain runs to 130 residues: D-ribose pyranase (130 aa).

His20 (proton donor) is an active-site residue. Residues Asp28, His97, and 119–121 each bind substrate; that span reads YAN.

This sequence belongs to the RbsD / FucU family. RbsD subfamily. As to quaternary structure, homodecamer.

The protein resides in the cytoplasm. The catalysed reaction is beta-D-ribopyranose = beta-D-ribofuranose. The protein operates within carbohydrate metabolism; D-ribose degradation; D-ribose 5-phosphate from beta-D-ribopyranose: step 1/2. Catalyzes the interconversion of beta-pyran and beta-furan forms of D-ribose. This Paracidovorax citrulli (strain AAC00-1) (Acidovorax citrulli) protein is D-ribose pyranase.